Here is a 379-residue protein sequence, read N- to C-terminus: Cytochrome b (379 aa).

The next 4 membrane-spanning stretches (helical) occupy residues 34–54 (FGSL…LLAM), 78–99 (WFIR…YLHI), 114–134 (WNTG…GYVL), and 179–199 (FFAL…VHLT). The heme b site is built by His84 and His98. 2 residues coordinate heme b: His183 and His197. Position 202 (His202) interacts with a ubiquinone. 4 helical membrane-spanning segments follow: residues 227-247 (LKDI…AFFS), 289-309 (LGGV…PLLH), 321-341 (LSQL…WIGS), and 348-368 (FIII…VLFP).

It belongs to the cytochrome b family. As to quaternary structure, the cytochrome bc1 complex contains 11 subunits: 3 respiratory subunits (MT-CYB, CYC1 and UQCRFS1), 2 core proteins (UQCRC1 and UQCRC2) and 6 low-molecular weight proteins (UQCRH/QCR6, UQCRB/QCR7, UQCRQ/QCR8, UQCR10/QCR9, UQCR11/QCR10 and a cleavage product of UQCRFS1). This cytochrome bc1 complex then forms a dimer. Requires heme b as cofactor.

It is found in the mitochondrion inner membrane. Component of the ubiquinol-cytochrome c reductase complex (complex III or cytochrome b-c1 complex) that is part of the mitochondrial respiratory chain. The b-c1 complex mediates electron transfer from ubiquinol to cytochrome c. Contributes to the generation of a proton gradient across the mitochondrial membrane that is then used for ATP synthesis. The protein is Cytochrome b (MT-CYB) of Struthio camelus (Common ostrich).